The chain runs to 199 residues: Probable GTP-binding protein EngB (199 aa).

The 172-residue stretch at 28 to 199 folds into the EngB-type G domain; sequence DLPEIALAGR…DSWDAILEQV (172 aa). Residues 36 to 43, 63 to 67, 81 to 84, 148 to 151, and 180 to 182 contribute to the GTP site; these read GRSNVGKS, GKTQL, DVPG, TKAD, and FSS. Mg(2+) contacts are provided by Ser43 and Thr65.

Belongs to the TRAFAC class TrmE-Era-EngA-EngB-Septin-like GTPase superfamily. EngB GTPase family. Mg(2+) is required as a cofactor.

Its function is as follows. Necessary for normal cell division and for the maintenance of normal septation. In Streptococcus pyogenes serotype M1, this protein is Probable GTP-binding protein EngB.